The following is a 528-amino-acid chain: Lanosterol 14-alpha demethylase (528 aa).

A helical membrane pass occupies residues 15 to 37 (LSLSVTQQISILLGVPFVYNLVW). Tyr64 contacts oteseconazole. Itraconazole is bound at residue Tyr118. Gly307 contacts posaconazole. His377 provides a ligand contact to oteseconazole. Cys470 contributes to the heme binding site.

Belongs to the cytochrome P450 family. Requires heme as cofactor.

It is found in the endoplasmic reticulum membrane. The enzyme catalyses a 14alpha-methyl steroid + 3 reduced [NADPH--hemoprotein reductase] + 3 O2 = a Delta(14) steroid + formate + 3 oxidized [NADPH--hemoprotein reductase] + 4 H2O + 4 H(+). It carries out the reaction a 14alpha-methyl steroid + reduced [NADPH--hemoprotein reductase] + O2 = a 14alpha-hydroxymethyl steroid + oxidized [NADPH--hemoprotein reductase] + H2O + H(+). It catalyses the reaction a 14alpha-hydroxymethyl steroid + reduced [NADPH--hemoprotein reductase] + O2 = a 14alpha-formyl steroid + oxidized [NADPH--hemoprotein reductase] + 2 H2O + H(+). The catalysed reaction is a 14alpha-formyl steroid + reduced [NADPH--hemoprotein reductase] + O2 = a Delta(14) steroid + formate + oxidized [NADPH--hemoprotein reductase] + H2O + 2 H(+). The enzyme catalyses lanosterol + 3 reduced [NADPH--hemoprotein reductase] + 3 O2 = 4,4-dimethyl-5alpha-cholesta-8,14,24-trien-3beta-ol + formate + 3 oxidized [NADPH--hemoprotein reductase] + 4 H2O + 4 H(+). It carries out the reaction lanosterol + reduced [NADPH--hemoprotein reductase] + O2 = 32-hydroxylanosterol + oxidized [NADPH--hemoprotein reductase] + H2O + H(+). It catalyses the reaction 32-hydroxylanosterol + reduced [NADPH--hemoprotein reductase] + O2 = 32-oxolanosterol + oxidized [NADPH--hemoprotein reductase] + 2 H2O + H(+). The catalysed reaction is 32-oxolanosterol + reduced [NADPH--hemoprotein reductase] + O2 = 4,4-dimethyl-5alpha-cholesta-8,14,24-trien-3beta-ol + formate + oxidized [NADPH--hemoprotein reductase] + H2O + 2 H(+). The enzyme catalyses eburicol + 3 reduced [NADPH--hemoprotein reductase] + 3 O2 = 14-demethyleburicol + formate + 3 oxidized [NADPH--hemoprotein reductase] + 4 H2O + 4 H(+). It carries out the reaction eburicol + reduced [NADPH--hemoprotein reductase] + O2 = 32-hydroxyeburicol + oxidized [NADPH--hemoprotein reductase] + H2O + H(+). It catalyses the reaction 32-hydroxyeburicol + reduced [NADPH--hemoprotein reductase] + O2 = 32-oxoeburicol + oxidized [NADPH--hemoprotein reductase] + 2 H2O + H(+). The catalysed reaction is 32-oxoeburicol + reduced [NADPH--hemoprotein reductase] + O2 = 14-demethyleburicol + formate + oxidized [NADPH--hemoprotein reductase] + H2O + 2 H(+). Its pathway is steroid biosynthesis; zymosterol biosynthesis; zymosterol from lanosterol: step 1/6. With respect to regulation, the catalytic activity is inhibited by the binding of azoles clotrimazole, miconazole, fluconazole, ketoconazole, oteseconazole (VT-1161), tetraconazole, the triazole SCH39304, and the triazole derivative ICI 153066. In terms of biological role, sterol 14alpha-demethylase that plays a critical role in the third module of ergosterol biosynthesis pathway, being ergosterol the major sterol component in fungal membranes that participates in a variety of functions. The third module or late pathway involves the ergosterol synthesis itself through consecutive reactions that mainly occur in the endoplasmic reticulum (ER) membrane. In filamentous fungi, during the initial step of this module, lanosterol (lanosta-8,24-dien-3beta-ol) can be metabolized to eburicol. Sterol 14alpha-demethylase catalyzes the three-step oxidative removal of the 14alpha-methyl group (C-32) of both these sterols in the form of formate, and converts eburicol and lanosterol to 14-demethyleburicol (4,4,24-trimethylergosta-8,14,24(28)-trienol) and 4,4-dimethyl-5alpha-cholesta-8,14,24-trien-3beta-ol, respectively, which are further metabolized by other enzymes in the pathway to ergosterol. Can also use substrates not intrinsic to fungi, such as 24,25-dihydrolanosterol (DHL), producing 4,4-dimethyl-8,14-cholestadien-3-beta-ol, but at lower rates than the endogenous substrates. The protein is Lanosterol 14-alpha demethylase of Candida albicans (strain SC5314 / ATCC MYA-2876) (Yeast).